The sequence spans 308 residues: MIPMDVVLIVLILVLVGYFSKIFGILKEEHAKILNNIVIYIAMPSTIFLTISKNVSSSQILEFLKLPVVIFLCCLFVGILAYLLGKHIFKLKDEKLGGLILVSMLGNTGFLGYPVALGMFGEEGLARAIFCDLGGVFATMLLGTYVGIRFGKGRDKSILKDMAKFPPLITGILSIILVFFGFKLNYIPSFILKSLNYLSSATVPLIMMSLGLSLSPKALKFGVFWGIIASIFRFIVSPATAFTLSELINIKGLEKNVLLVESSMPSAMMTLVLGTLYELDIKLIASSIFITTTFSLLVIALWGWILLN.

10 helical membrane passes run 6-26, 31-51, 63-83, 100-120, 128-148, 162-182, 195-215, 221-241, 257-277, and 287-307; these read VVLI…FGIL, AKIL…FLTI, FLKL…LAYL, ILVS…LGMF, AIFC…YVGI, MAKF…FFGF, LNYL…LSLS, FGVF…PATA, VLLV…GTLY, and SIFI…WILL.

This sequence belongs to the auxin efflux carrier (TC 2.A.69) family.

The protein resides in the cell membrane. This is an uncharacterized protein from Methanocaldococcus jannaschii (strain ATCC 43067 / DSM 2661 / JAL-1 / JCM 10045 / NBRC 100440) (Methanococcus jannaschii).